The primary structure comprises 196 residues: Peptide deformylase (196 aa).

Positions 103 and 145 each coordinate Fe cation. Glu-146 is a catalytic residue. A Fe cation-binding site is contributed by His-149.

It belongs to the polypeptide deformylase family. It depends on Fe(2+) as a cofactor.

The enzyme catalyses N-terminal N-formyl-L-methionyl-[peptide] + H2O = N-terminal L-methionyl-[peptide] + formate. In terms of biological role, removes the formyl group from the N-terminal Met of newly synthesized proteins. Requires at least a dipeptide for an efficient rate of reaction. N-terminal L-methionine is a prerequisite for activity but the enzyme has broad specificity at other positions. This Rhodococcus opacus (strain B4) protein is Peptide deformylase.